The sequence spans 366 residues: Methylthioribose-1-phosphate isomerase (366 aa).

Residues 53-55 (RGA), arginine 90, and glutamine 203 each bind substrate. Aspartate 244 (proton donor) is an active-site residue. Residue 254-255 (NK) participates in substrate binding.

This sequence belongs to the eIF-2B alpha/beta/delta subunits family. MtnA subfamily.

It catalyses the reaction 5-(methylsulfanyl)-alpha-D-ribose 1-phosphate = 5-(methylsulfanyl)-D-ribulose 1-phosphate. Its pathway is amino-acid biosynthesis; L-methionine biosynthesis via salvage pathway; L-methionine from S-methyl-5-thio-alpha-D-ribose 1-phosphate: step 1/6. Catalyzes the interconversion of methylthioribose-1-phosphate (MTR-1-P) into methylthioribulose-1-phosphate (MTRu-1-P). The chain is Methylthioribose-1-phosphate isomerase from Methylocella silvestris (strain DSM 15510 / CIP 108128 / LMG 27833 / NCIMB 13906 / BL2).